We begin with the raw amino-acid sequence, 468 residues long: Adenosylhomocysteinase (468 aa).

Substrate-binding residues include T57, D132, and E194. Residue 195 to 197 (TTT) coordinates NAD(+). K224 and D228 together coordinate substrate. Residues N229, 258 to 263 (GFGDVG), E281, N316, 337 to 339 (IGH), and N382 contribute to the NAD(+) site.

It belongs to the adenosylhomocysteinase family. NAD(+) is required as a cofactor.

It localises to the cytoplasm. The enzyme catalyses S-adenosyl-L-homocysteine + H2O = L-homocysteine + adenosine. Its pathway is amino-acid biosynthesis; L-homocysteine biosynthesis; L-homocysteine from S-adenosyl-L-homocysteine: step 1/1. In terms of biological role, may play a key role in the regulation of the intracellular concentration of adenosylhomocysteine. In Methylorubrum extorquens (strain CM4 / NCIMB 13688) (Methylobacterium extorquens), this protein is Adenosylhomocysteinase.